Reading from the N-terminus, the 283-residue chain is Large ribosomal subunit protein uL2 (283 aa).

Positions 215 to 283 (RHKGIRPTVR…IRGRKKRINN (69 aa)) are disordered. Over residues 274 to 283 (IRGRKKRINN) the composition is skewed to basic residues.

It belongs to the universal ribosomal protein uL2 family. In terms of assembly, part of the 50S ribosomal subunit. Forms a bridge to the 30S subunit in the 70S ribosome.

One of the primary rRNA binding proteins. Required for association of the 30S and 50S subunits to form the 70S ribosome, for tRNA binding and peptide bond formation. It has been suggested to have peptidyltransferase activity; this is somewhat controversial. Makes several contacts with the 16S rRNA in the 70S ribosome. The chain is Large ribosomal subunit protein uL2 from Mycoplasma mobile (strain ATCC 43663 / 163K / NCTC 11711) (Mesomycoplasma mobile).